A 38-amino-acid chain; its full sequence is Conotoxin r7a (38 aa).

A propeptide spanning residues 1-5 is cleaved from the precursor; it reads APAKR. 6'-bromotryptophan is present on Trp-6. 2 positions are modified to 4-carboxyglutamate: Glu-10 and Glu-11. Intrachain disulfides connect Cys-12–Cys-26, Cys-19–Cys-30, and Cys-25–Cys-35. Position 15 is a 6'-bromotryptophan (Trp-15). 4-carboxyglutamate occurs at positions 20 and 31. Residue Trp-38 is modified to 6'-bromotryptophan.

The protein belongs to the conotoxin O2 superfamily. Expressed by the venom duct.

It is found in the secreted. Its function is as follows. Induces a sleep-like state in mice. In Conus radiatus (Rayed cone), this protein is Conotoxin r7a.